The chain runs to 202 residues: MTYELPKLPYTYDALEPNFDKETMELHYTKHHNTYVTKLNEAVSGHPELAEKPVEELVANLDSVPEDIRGAVRNHGGGHANHTLFWSILSPNGGGAPTGDLKSAIESEFGTFDDFKEKFNAAAAARFGSGWAWLVVNNGKLEIVSTANQDSPLSDGKTPVLGLDVWEHAYYLKFQNRRPEYIDTFWNVVNWDEANKRFDAAK.

H27, H82, D164, and H168 together coordinate Mn(2+).

This sequence belongs to the iron/manganese superoxide dismutase family. Homodimer. It depends on Mn(2+) as a cofactor.

The catalysed reaction is 2 superoxide + 2 H(+) = H2O2 + O2. Destroys superoxide anion radicals which are normally produced within the cells and which are toxic to biological systems. The sequence is that of Superoxide dismutase [Mn] (sodA) from Listeria innocua serovar 6a (strain ATCC BAA-680 / CLIP 11262).